Reading from the N-terminus, the 347-residue chain is tRNA pseudouridine synthase D (347 aa).

The Nucleophile role is filled by Asp81. The TRUD domain maps to 158–305 (GVPNYFGSQR…RHDRRDIALK (148 aa)).

This sequence belongs to the pseudouridine synthase TruD family.

It carries out the reaction uridine(13) in tRNA = pseudouridine(13) in tRNA. Responsible for synthesis of pseudouridine from uracil-13 in transfer RNAs. This Vibrio campbellii (strain ATCC BAA-1116) protein is tRNA pseudouridine synthase D.